Consider the following 494-residue polypeptide: tRNA-2-methylthio-N(6)-dimethylallyladenosine synthase (494 aa).

The 117-residue stretch at 4–120 (RSYQVRTFGC…LPVLLERARH (117 aa)) folds into the MTTase N-terminal domain. [4Fe-4S] cluster-binding residues include cysteine 13, cysteine 49, cysteine 83, cysteine 157, cysteine 161, and cysteine 164. A Radical SAM core domain is found at 143–374 (RASHHSAWVS…SLQDEMSWAE (232 aa)). A TRAM domain is found at 376-449 (RAQVGRRVEI…PHHLTADGPL (74 aa)). Residues 465-494 (RAIAGDTPRPDRPAVSLGMPQLRPSAPAAR) form a disordered region.

It belongs to the methylthiotransferase family. MiaB subfamily. As to quaternary structure, monomer. Requires [4Fe-4S] cluster as cofactor.

The protein localises to the cytoplasm. It catalyses the reaction N(6)-dimethylallyladenosine(37) in tRNA + (sulfur carrier)-SH + AH2 + 2 S-adenosyl-L-methionine = 2-methylsulfanyl-N(6)-dimethylallyladenosine(37) in tRNA + (sulfur carrier)-H + 5'-deoxyadenosine + L-methionine + A + S-adenosyl-L-homocysteine + 2 H(+). In terms of biological role, catalyzes the methylthiolation of N6-(dimethylallyl)adenosine (i(6)A), leading to the formation of 2-methylthio-N6-(dimethylallyl)adenosine (ms(2)i(6)A) at position 37 in tRNAs that read codons beginning with uridine. The protein is tRNA-2-methylthio-N(6)-dimethylallyladenosine synthase of Parafrankia sp. (strain EAN1pec).